Reading from the N-terminus, the 1573-residue chain is Pentafunctional AROM polypeptide 1 (1573 aa).

The 3-dehydroquinate synthase stretch occupies residues 1 to 380 (MAEPTKISIL…YEPKASVVSN (380 aa)). Residues 44-46 (DTN), 81-84 (ENSK), 112-114 (GGV), and Asp117 each bind NAD(+). Arg128 lines the 7-phospho-2-dehydro-3-deoxy-D-arabino-heptonate pocket. 137-138 (TT) is an NAD(+) binding site. The 7-phospho-2-dehydro-3-deoxy-D-arabino-heptonate site is built by Asp144 and Lys150. Lys159 serves as a coordination point for NAD(+). A 7-phospho-2-dehydro-3-deoxy-D-arabino-heptonate-binding site is contributed by Asn160. Residues 177-180 (FIDT) and Asn188 contribute to the NAD(+) site. Glu192 is a Zn(2+) binding site. Residues 192-195 (EVIK) and Lys246 contribute to the 7-phospho-2-dehydro-3-deoxy-D-arabino-heptonate site. The active-site Proton acceptor; for 3-dehydroquinate synthase activity is Glu256. Residues 260 to 264 (RNLLN) and His267 contribute to the 7-phospho-2-dehydro-3-deoxy-D-arabino-heptonate site. His267 provides a ligand contact to Zn(2+). The active-site Proton acceptor; for 3-dehydroquinate synthase activity is His271. His283 and Lys352 together coordinate 7-phospho-2-dehydro-3-deoxy-D-arabino-heptonate. His283 contacts Zn(2+). Positions 393 to 838 (VIPGVPKDLN…WDALKQKFGV (446 aa)) are EPSP synthase. Catalysis depends on Cys820, which acts as the For EPSP synthase activity. Residues 859 to 1051 (DASIVIIGMR…RRKRLSFFMS (193 aa)) are shikimate kinase. Residue 866–873 (GMRGAGKT) coordinates ATP. The segment at 1052–1273 (LTLTDLRDSG…AAPGQLSAAE (222 aa)) is 3-dehydroquinase. The Proton acceptor; for 3-dehydroquinate dehydratase activity role is filled by His1175. Lys1203 acts as the Schiff-base intermediate with substrate; for 3-dehydroquinate dehydratase activity in catalysis. The segment at 1286-1573 (AKKFAIFGKP…NAVLGTDETK (288 aa)) is shikimate dehydrogenase.

The protein in the N-terminal section; belongs to the sugar phosphate cyclases superfamily. Dehydroquinate synthase family. This sequence in the 2nd section; belongs to the EPSP synthase family. It in the 3rd section; belongs to the shikimate kinase family. In the 4th section; belongs to the type-I 3-dehydroquinase family. The protein in the C-terminal section; belongs to the shikimate dehydrogenase family. Homodimer. The cofactor is Zn(2+).

The protein resides in the cytoplasm. The enzyme catalyses 7-phospho-2-dehydro-3-deoxy-D-arabino-heptonate = 3-dehydroquinate + phosphate. It carries out the reaction 3-dehydroquinate = 3-dehydroshikimate + H2O. It catalyses the reaction shikimate + NADP(+) = 3-dehydroshikimate + NADPH + H(+). The catalysed reaction is shikimate + ATP = 3-phosphoshikimate + ADP + H(+). The enzyme catalyses 3-phosphoshikimate + phosphoenolpyruvate = 5-O-(1-carboxyvinyl)-3-phosphoshikimate + phosphate. Its pathway is metabolic intermediate biosynthesis; chorismate biosynthesis; chorismate from D-erythrose 4-phosphate and phosphoenolpyruvate: step 2/7. It functions in the pathway metabolic intermediate biosynthesis; chorismate biosynthesis; chorismate from D-erythrose 4-phosphate and phosphoenolpyruvate: step 3/7. It participates in metabolic intermediate biosynthesis; chorismate biosynthesis; chorismate from D-erythrose 4-phosphate and phosphoenolpyruvate: step 4/7. The protein operates within metabolic intermediate biosynthesis; chorismate biosynthesis; chorismate from D-erythrose 4-phosphate and phosphoenolpyruvate: step 5/7. Its pathway is metabolic intermediate biosynthesis; chorismate biosynthesis; chorismate from D-erythrose 4-phosphate and phosphoenolpyruvate: step 6/7. Functionally, the AROM polypeptide catalyzes 5 consecutive enzymatic reactions in prechorismate polyaromatic amino acid biosynthesis. This chain is Pentafunctional AROM polypeptide 1, found in Talaromyces marneffei (strain ATCC 18224 / CBS 334.59 / QM 7333) (Penicillium marneffei).